The following is a 337-amino-acid chain: Monoacylglycerol lipase ABHD6 (337 aa).

Residues 1 to 8 are Extracellular-facing; sequence MDLDVVNM. The chain crosses the membrane as a helical; Signal-anchor for type II membrane protein span at residues 9 to 29; the sequence is FVIAGGTLAIPILAFVASFLL. The Cytoplasmic portion of the chain corresponds to 30 to 337; it reads WPSALIRIYY…HNTDNNKKLD (308 aa). In terms of domain architecture, AB hydrolase-1 spans 72–313; the sequence is PSILMLHGFS…CGHSVVMERP (242 aa). (9Z)-octadecenoate is bound at residue Phe80. Ser148 acts as the Nucleophile in catalysis. (9Z)-octadecenoate is bound at residue Met149. Active-site charge relay system residues include Asp278 and His306. His306 is a (9Z)-octadecenoate binding site.

Belongs to the AB hydrolase superfamily.

The protein localises to the late endosome membrane. It is found in the lysosome membrane. The protein resides in the mitochondrion membrane. The enzyme catalyses Hydrolyzes glycerol monoesters of long-chain fatty acids.. It carries out the reaction 1-octanoylglycerol + H2O = octanoate + glycerol + H(+). The catalysed reaction is 1-decanoylglycerol + H2O = decanoate + glycerol + H(+). It catalyses the reaction 1-dodecanoylglycerol + H2O = dodecanoate + glycerol + H(+). The enzyme catalyses 1-tetradecanoylglycerol + H2O = tetradecanoate + glycerol + H(+). It carries out the reaction 2-hexadecanoylglycerol + H2O = glycerol + hexadecanoate + H(+). The catalysed reaction is 2-(9Z-octadecenoyl)-glycerol + H2O = glycerol + (9Z)-octadecenoate + H(+). It catalyses the reaction 1-(9Z-octadecenoyl)-glycerol + H2O = glycerol + (9Z)-octadecenoate + H(+). The enzyme catalyses 2-(9Z,12Z-octadecadienoyl)-glycerol + H2O = (9Z,12Z)-octadecadienoate + glycerol + H(+). It carries out the reaction 2-(5Z,8Z,11Z,14Z-eicosatetraenoyl)-glycerol + H2O = glycerol + (5Z,8Z,11Z,14Z)-eicosatetraenoate + H(+). The catalysed reaction is 1-(5Z,8Z,11Z,14Z-eicosatetraenoyl)-glycerol + H2O = glycerol + (5Z,8Z,11Z,14Z)-eicosatetraenoate + H(+). It catalyses the reaction 1-(9Z,12Z-octadecadienoyl)-glycerol + H2O = (9Z,12Z)-octadecadienoate + glycerol + H(+). The enzyme catalyses 3-(9Z-octadecenoyl)-sn-glycero-1-phospho-(3'-(9Z-octadecenoyl)-1'-sn-glycerol) + H2O = 3-(9Z-octadecenoyl)-sn-glycero-1-phospho-(1'-sn-glycerol) + (9Z)-octadecenoate + H(+). It carries out the reaction (S,S)-2-(9Z-octadecenoyl)-sn-glycero-1-phospho-(2'-(9Z-octadecenoyl)-1'-sn-glycerol) + H2O = (S,S)-2-(9Z-octadecenoyl)-sn-glycero-1-phospho-(1'-sn-glycerol) + (9Z)-octadecenoate + H(+). The catalysed reaction is (R,R)-2-(9Z-octadecenoyl)-sn-glycero-3-phospho-(2'-(9Z-octadecenoyl)-3'-sn-glycerol) + H2O = (R,R)-2-(9Z-octadecenoyl)-sn-glycero-3-phospho-(3'-sn-glycerol) + (9Z)-octadecenoate + H(+). Functionally, lipase that preferentially hydrolysis medium-chain saturated monoacylglycerols including 2-arachidonoylglycerol. Through 2-arachidonoylglycerol degradation may regulate endocannabinoid signaling pathways. Also has a lysophosphatidyl lipase activity with a preference for lysophosphatidylglycerol among other lysophospholipids. Also able to degrade bis(monoacylglycero)phosphate (BMP) and constitutes the major enzyme for BMP catabolism. BMP, also known as lysobisphosphatidic acid, is enriched in late endosomes and lysosomes and plays a key role in the formation of intraluminal vesicles and in lipid sorting. This Homo sapiens (Human) protein is Monoacylglycerol lipase ABHD6.